Consider the following 1438-residue polypeptide: DNA polymerase III PolC-type (1438 aa).

The region spanning 422 to 578 (YVVFDVETTG…YDTEATAYIF (157 aa)) is the Exonuclease domain.

The protein belongs to the DNA polymerase type-C family. PolC subfamily.

The protein resides in the cytoplasm. It catalyses the reaction DNA(n) + a 2'-deoxyribonucleoside 5'-triphosphate = DNA(n+1) + diphosphate. Its function is as follows. Required for replicative DNA synthesis. This DNA polymerase also exhibits 3' to 5' exonuclease activity. This is DNA polymerase III PolC-type from Staphylococcus aureus (strain MSSA476).